The primary structure comprises 332 residues: DNA-directed RNA polymerase subunit alpha (332 aa).

The segment at methionine 1–asparagine 226 is alpha N-terminal domain (alpha-NTD). The segment at proline 245 to glutamate 332 is alpha C-terminal domain (alpha-CTD).

Belongs to the RNA polymerase alpha chain family. As to quaternary structure, homodimer. The RNAP catalytic core consists of 2 alpha, 1 beta, 1 beta' and 1 omega subunit. When a sigma factor is associated with the core the holoenzyme is formed, which can initiate transcription.

It carries out the reaction RNA(n) + a ribonucleoside 5'-triphosphate = RNA(n+1) + diphosphate. In terms of biological role, DNA-dependent RNA polymerase catalyzes the transcription of DNA into RNA using the four ribonucleoside triphosphates as substrates. This chain is DNA-directed RNA polymerase subunit alpha, found in Bifidobacterium adolescentis (strain ATCC 15703 / DSM 20083 / NCTC 11814 / E194a).